The sequence spans 189 residues: Frataxin-like protein, mitochondrial (189 aa).

Residues 1–50 constitute a mitochondrion transit peptide; it reads MNCARLHQRIPLRAMALTTTSYPALAPSHSFANASTSVMTASAMAVAHRA.

It belongs to the frataxin family. In terms of assembly, interacts with IscU; the interaction is direct.

It is found in the mitochondrion. It catalyses the reaction 4 Fe(2+) + O2 + 4 H(+) = 4 Fe(3+) + 2 H2O. Its function is as follows. Iron-binding protein which binds 2 iron atoms per monomer. Probably, acts as an iron carrier for the biosynthesis of Fe-S clusters. Stimulates the cysteine desulphurase activity of IscS in the presence of IscU. The protein is Frataxin-like protein, mitochondrial of Leishmania donovani.